The following is a 398-amino-acid chain: Acetate kinase (398 aa).

Asn8 contributes to the Mg(2+) binding site. Lys15 contacts ATP. Arg89 provides a ligand contact to substrate. Catalysis depends on Asp146, which acts as the Proton donor/acceptor. ATP contacts are provided by residues 206–210, 281–283, and 329–333; these read HIGNG, DLR, and GVGEN. Glu383 lines the Mg(2+) pocket.

This sequence belongs to the acetokinase family. Homodimer. Mg(2+) is required as a cofactor. The cofactor is Mn(2+).

It localises to the cytoplasm. It carries out the reaction acetate + ATP = acetyl phosphate + ADP. It participates in metabolic intermediate biosynthesis; acetyl-CoA biosynthesis; acetyl-CoA from acetate: step 1/2. In terms of biological role, catalyzes the formation of acetyl phosphate from acetate and ATP. Can also catalyze the reverse reaction. The protein is Acetate kinase of Macrococcus caseolyticus (strain JCSC5402) (Macrococcoides caseolyticum).